A 194-amino-acid polypeptide reads, in one-letter code: Elongation factor P (194 aa).

Belongs to the elongation factor P family.

Its subcellular location is the cytoplasm. It participates in protein biosynthesis; polypeptide chain elongation. Its function is as follows. Involved in peptide bond synthesis. Stimulates efficient translation and peptide-bond synthesis on native or reconstituted 70S ribosomes in vitro. Probably functions indirectly by altering the affinity of the ribosome for aminoacyl-tRNA, thus increasing their reactivity as acceptors for peptidyl transferase. The polypeptide is Elongation factor P (Hydrogenobaculum sp. (strain Y04AAS1)).